A 677-amino-acid chain; its full sequence is MAAGGGGSCDPLAPAGVPCAFSPHSQAYFALASTDGHLRVWETANNRLHQEYVPSAHLSGTCTCLAWAPARLQAKESPQRKKRKSEAVGMSNQTDLLALGTAVGSILLYSTVKGELHSKLISGGHDNRVNCIQWHQDSGCLYSCSDDKHIVEWNVQTCKVKCKWKGDNSSVSSLCISPDGKMLLSAGRTIKLWVLETKEVYRHFTGHATPVSSLMFTTIRPPNESQPFDGITGLYFLSGAVHDRLLNVWQVRSENKEKSAVMSFTVTDEPVYIDLTLSENKEEPVKLAVVCRDGQVHLFEHILNGYCKKPLTSNCTIQIATPGKGKKSTPKPIPILAAGFCSDKMSLLLVYGSWFQPTIERVALNSREPHMCLVRDISNCWAPKVETAITKVRTPVMNSEAKVLVPGIPGHHAAIKPAPPQTEQVESKRKSGGNEVSIEERLGAMDIDTHKKGKEDLQTNSFPVLLTQGLESNDFEMLNKVLQTRNVNLIKKTVLRMPLHTIIPLLQELTKRLQGHPNSAVLMVQWLKCVLTVHASYLSTLPDLVPQLGTLYQLMESRVKTFQKLSHLHGKLILLITQVTASEKTKGATSPGQKAKLVYEEESSEEESDDEIADKDSEDNWDEDEEESESEKDEDVEEEDEDAEGKDEENGEDRDTASEKELNGDSDLDPENESEEE.

6 WD repeats span residues 11-51 (PLAP…LHQE), 57-119 (HLSG…LHSK), 124-163 (GHDNRVNCIQWHQDSGCLYSCSDDKHIVEWNVQTCKVKCK), 166-205 (GDNSSVSSLCISPDGKMLLSAGRTIKLWVLETKEVYRHFT), 207-259 (HATP…KEKS), and 267-309 (TDEP…YCKK). Position 77 is a phosphoserine (Ser77). Lys309 participates in a covalent cross-link: Glycyl lysine isopeptide (Lys-Gly) (interchain with G-Cter in SUMO1); alternate. A Glycyl lysine isopeptide (Lys-Gly) (interchain with G-Cter in SUMO2); alternate cross-link involves residue Lys309. Thr321 carries the post-translational modification Phosphothreonine. Lys384 participates in a covalent cross-link: Glycyl lysine isopeptide (Lys-Gly) (interchain with G-Cter in SUMO1); alternate. Lys384 is covalently cross-linked (Glycyl lysine isopeptide (Lys-Gly) (interchain with G-Cter in SUMO2); alternate). Thr394 is modified (phosphothreonine). Phosphoserine is present on residues Ser399, Ser431, Ser437, and Ser590. 2 disordered regions span residues 414–445 (AIKPAPPQTEQVESKRKSGGNEVSIEERLGAM) and 582–677 (SEKT…SEEE). Over residues 582–592 (SEKTKGATSPG) the composition is skewed to polar residues. The segment covering 600-652 (EEESSEEESDDEIADKDSEDNWDEDEEESESEKDEDVEEEDEDAEGKDEENGE) has biased composition (acidic residues). Residues 653 to 663 (DRDTASEKELN) are compositionally biased toward basic and acidic residues. A Phosphothreonine modification is found at Thr656. Position 658 is a phosphoserine (Ser658). Residues 664-677 (GDSDLDPENESEEE) show a composition bias toward acidic residues.

Belongs to the UTP5 family. As to quaternary structure, part of the small subunit (SSU) processome, composed of more than 70 proteins and the RNA chaperone small nucleolar RNA (snoRNA) U3. May be a component of the proposed t-UTP subcomplex of the ribosomal small subunit (SSU) processome containing at least UTP4, WDR43, HEATR1, UTP15, WDR75. Binds to RNA; binding is required for its chromatin association. Interacts with CDK9, DDX21 and SUPT6H. Interacts with RNA polymerase II. Interacts directly with UTP4 and UTP15.

It is found in the nucleus. Its subcellular location is the nucleolus. The protein resides in the nucleolus fibrillar center. The protein localises to the nucleoplasm. Its function is as follows. Ribosome biogenesis factor that coordinates hyperactive transcription and ribogenesis. Part of the small subunit (SSU) processome, first precursor of the small eukaryotic ribosomal subunit. During the assembly of the SSU processome in the nucleolus, many ribosome biogenesis factors, an RNA chaperone and ribosomal proteins associate with the nascent pre-rRNA and work in concert to generate RNA folding, modifications, rearrangements and cleavage as well as targeted degradation of pre-ribosomal RNA by the RNA exosome. Involved in nucleolar processing of pre-18S ribosomal RNA. Required for optimal pre-ribosomal RNA transcription by RNA polymerase I. Essential for stem cell pluripotency and embryonic development. In the nucleoplasm, recruited by promoter-associated/nascent transcripts and transcription to active promoters where it facilitates releases of elongation factor P-TEFb and paused RNA polymerase II to allow transcription elongation and maintain high-level expression of its targets genes. This Homo sapiens (Human) protein is WD repeat-containing protein 43.